Consider the following 260-residue polypeptide: 21S rRNA pseudouridine(2819) synthase (260 aa).

The active site involves Asp-68.

The protein belongs to the pseudouridine synthase RluA family.

Its subcellular location is the mitochondrion. It carries out the reaction uridine(2819) in 21S rRNA = pseudouridine(2819) in 21S rRNA. Its function is as follows. Pseudouridylate synthase responsible for the pseudouridine-2819 formation in mitochondrial 21S rRNA. May modulate the efficiency or the fidelity of the mitochondrial translation machinery. The polypeptide is 21S rRNA pseudouridine(2819) synthase (PUS5) (Eremothecium gossypii (strain ATCC 10895 / CBS 109.51 / FGSC 9923 / NRRL Y-1056) (Yeast)).